Here is a 168-residue protein sequence, read N- to C-terminus: Phosphopantetheine adenylyltransferase (168 aa).

A substrate-binding site is contributed by T13. Residues 13 to 14 (TF) and H21 each bind ATP. Residues K45, L78, and R92 each coordinate substrate. ATP contacts are provided by residues 93–95 (GLR), E103, and 128–134 (TQFISSS).

It belongs to the bacterial CoaD family. As to quaternary structure, homohexamer. Requires Mg(2+) as cofactor.

The protein resides in the cytoplasm. It catalyses the reaction (R)-4'-phosphopantetheine + ATP + H(+) = 3'-dephospho-CoA + diphosphate. It functions in the pathway cofactor biosynthesis; coenzyme A biosynthesis; CoA from (R)-pantothenate: step 4/5. In terms of biological role, reversibly transfers an adenylyl group from ATP to 4'-phosphopantetheine, yielding dephospho-CoA (dPCoA) and pyrophosphate. This chain is Phosphopantetheine adenylyltransferase, found in Wolbachia pipientis subsp. Culex pipiens (strain wPip).